We begin with the raw amino-acid sequence, 350 residues long: uncharacterized protein (350 aa).

In terms of biological role, may play a role in septum formation. This is an uncharacterized protein from Mycobacterium tuberculosis (strain CDC 1551 / Oshkosh).